A 195-amino-acid polypeptide reads, in one-letter code: Large ribosomal subunit protein uL5 (195 aa).

It belongs to the universal ribosomal protein uL5 family. In terms of assembly, part of the 50S ribosomal subunit; part of the 5S rRNA/L5/L18/L25 subcomplex. Contacts the 5S rRNA and the P site tRNA. Forms a bridge to the 30S subunit in the 70S ribosome.

Its function is as follows. This is one of the proteins that bind and probably mediate the attachment of the 5S RNA into the large ribosomal subunit, where it forms part of the central protuberance. In the 70S ribosome it contacts protein S13 of the 30S subunit (bridge B1b), connecting the 2 subunits; this bridge is implicated in subunit movement. Contacts the P site tRNA; the 5S rRNA and some of its associated proteins might help stabilize positioning of ribosome-bound tRNAs. The polypeptide is Large ribosomal subunit protein uL5 (Pelodictyon phaeoclathratiforme (strain DSM 5477 / BU-1)).